The primary structure comprises 562 residues: Adenylate kinase isoenzyme 5 (562 aa).

Adenylate kinase stretches follow at residues 133–316 (KIIL…VAVD) and 377–559 (KIIF…TAID). Position 142–147 (142–147 (GSGKGT)) interacts with ATP. The segment at 162–193 (SVGELLRKKIHSASSNRKWSLIAKIITNGELA) is NMP 1. AMP is bound by residues Arg-168, 191–193 (ELA), 219–222 (GFPR), and Gln-226. The interval 256–266 (KRAEQQGRPDD) is LID 1. Position 257 (Arg-257) interacts with ATP. AMP-binding residues include Arg-263 and Arg-274. Position 386 to 391 (386 to 391 (GSGKGT)) interacts with ATP. Residues 406–435 (STGELLRQELTSESERSKLIRDIMERGDLV) are NMP 2. AMP-binding positions include Thr-407, Arg-412, 433–435 (DLV), 462–465 (GYPR), and Gln-469. The interval 499-509 (QRSQSSQRGED) is LID 2. Arg-500 is a binding site for ATP. The AMP site is built by Arg-506 and Arg-517. Residue Gly-545 participates in ATP binding.

It belongs to the adenylate kinase family. As to quaternary structure, monomer. Interacts with YWHAZ. Brain specific.

It localises to the cytoplasm. It catalyses the reaction AMP + ATP = 2 ADP. It carries out the reaction a 2'-deoxyribonucleoside 5'-diphosphate + ATP = a 2'-deoxyribonucleoside 5'-triphosphate + ADP. The enzyme catalyses a ribonucleoside 5'-diphosphate + ATP = a ribonucleoside 5'-triphosphate + ADP. In terms of biological role, nucleoside monophosphate (NMP) kinase that catalyzes the reversible transfer of the terminal phosphate group between nucleoside triphosphates and monophosphates. Active on AMP and dAMP with ATP as a donor. When GTP is used as phosphate donor, the enzyme phosphorylates AMP, CMP, and to a small extent dCMP. Also displays broad nucleoside diphosphate kinase activity. This Mus musculus (Mouse) protein is Adenylate kinase isoenzyme 5 (Ak5).